The chain runs to 260 residues: Cytosolic Fe-S cluster assembly factor Nubp2 homolog 1 (260 aa).

Residue 14 to 21 (GKGGVGKS) coordinates ATP. [4Fe-4S] cluster-binding residues include Cys188 and Cys191.

This sequence belongs to the Mrp/NBP35 ATP-binding proteins family. NUBP2/CFD1 subfamily. In terms of assembly, heterotetramer of 2 Nubp1 and 2 Nubp2 chains. It depends on [4Fe-4S] cluster as a cofactor.

The protein localises to the cytoplasm. Functionally, component of the cytosolic iron-sulfur (Fe/S) protein assembly (CIA) machinery. Required for maturation of extramitochondrial Fe-S proteins. The Nubp1-Nubp2 heterotetramer forms a Fe-S scaffold complex, mediating the de novo assembly of an Fe-S cluster and its transfer to target apoproteins. This chain is Cytosolic Fe-S cluster assembly factor Nubp2 homolog 1, found in Drosophila yakuba (Fruit fly).